The sequence spans 103 residues: Pyrimidine/purine nucleoside phosphorylase (103 aa).

Belongs to the nucleoside phosphorylase PpnP family.

The catalysed reaction is a purine D-ribonucleoside + phosphate = a purine nucleobase + alpha-D-ribose 1-phosphate. It catalyses the reaction adenosine + phosphate = alpha-D-ribose 1-phosphate + adenine. The enzyme catalyses cytidine + phosphate = cytosine + alpha-D-ribose 1-phosphate. It carries out the reaction guanosine + phosphate = alpha-D-ribose 1-phosphate + guanine. The catalysed reaction is inosine + phosphate = alpha-D-ribose 1-phosphate + hypoxanthine. It catalyses the reaction thymidine + phosphate = 2-deoxy-alpha-D-ribose 1-phosphate + thymine. The enzyme catalyses uridine + phosphate = alpha-D-ribose 1-phosphate + uracil. It carries out the reaction xanthosine + phosphate = alpha-D-ribose 1-phosphate + xanthine. Its function is as follows. Catalyzes the phosphorolysis of diverse nucleosides, yielding D-ribose 1-phosphate and the respective free bases. Can use uridine, adenosine, guanosine, cytidine, thymidine, inosine and xanthosine as substrates. Also catalyzes the reverse reactions. This Citrifermentans bemidjiense (strain ATCC BAA-1014 / DSM 16622 / JCM 12645 / Bem) (Geobacter bemidjiensis) protein is Pyrimidine/purine nucleoside phosphorylase.